A 556-amino-acid chain; its full sequence is Arginine--tRNA ligase (556 aa).

Positions 132–142 match the 'HIGH' region motif; that stretch reads ANPTGDLHLGH.

Belongs to the class-I aminoacyl-tRNA synthetase family. Monomer.

The protein resides in the cytoplasm. The catalysed reaction is tRNA(Arg) + L-arginine + ATP = L-arginyl-tRNA(Arg) + AMP + diphosphate. This is Arginine--tRNA ligase (argS) from Bacillus subtilis (strain 168).